The sequence spans 262 residues: MTRIHPTAIVEPGAQIDESVEIGPYAIVGPHVTIGARTTIGSHSVIEGHTTLGEDNRIGHYASVGGRPQDMKYKAEPTKLVIGNRNTIREFTTIHTGTVQDVGVTTLGDDNWIMAYVHIGHDCRVGNNVILSSNAQMAGHVEIGDYAIIGGMSGVHQFVRIGAHSMLGGASALVQDVPPFVIAAGNKAEPHGINVEGLRRRGFSPDAISALRSAYRLLYKNGLSLEEAKVQLRELAVAGGEGDAAVTAFVEFIDASQRGIIR.

The protein belongs to the transferase hexapeptide repeat family. LpxA subfamily. Homotrimer.

The protein localises to the cytoplasm. It carries out the reaction a (3R)-hydroxyacyl-[ACP] + UDP-N-acetyl-alpha-D-glucosamine = a UDP-3-O-[(3R)-3-hydroxyacyl]-N-acetyl-alpha-D-glucosamine + holo-[ACP]. Its pathway is glycolipid biosynthesis; lipid IV(A) biosynthesis; lipid IV(A) from (3R)-3-hydroxytetradecanoyl-[acyl-carrier-protein] and UDP-N-acetyl-alpha-D-glucosamine: step 1/6. Involved in the biosynthesis of lipid A, a phosphorylated glycolipid that anchors the lipopolysaccharide to the outer membrane of the cell. This is Acyl-[acyl-carrier-protein]--UDP-N-acetylglucosamine O-acyltransferase from Burkholderia ambifaria (strain ATCC BAA-244 / DSM 16087 / CCUG 44356 / LMG 19182 / AMMD) (Burkholderia cepacia (strain AMMD)).